A 446-amino-acid chain; its full sequence is Chromosomal replication initiator protein DnaA (446 aa).

The segment at 1–92 (MENISDLWNS…SQAEEEIDLP (92 aa)) is domain I, interacts with DnaA modulators. The disordered stretch occupies residues 87–107 (EEIDLPPSKPNSAQDDSNHLP). The domain II stretch occupies residues 93–109 (PSKPNSAQDDSNHLPQS). The span at 96–107 (PNSAQDDSNHLP) shows a compositional bias: polar residues. The segment at 110 to 326 (MLNPKYTFDT…GALIRVVAYS (217 aa)) is domain III, AAA+ region. ATP-binding residues include glycine 154, glycine 156, lysine 157, and threonine 158. The interval 327–446 (SLINKDINAD…QVEEINDILK (120 aa)) is domain IV, binds dsDNA.

It belongs to the DnaA family. Oligomerizes as a right-handed, spiral filament on DNA at oriC.

The protein localises to the cytoplasm. Functionally, plays an essential role in the initiation and regulation of chromosomal replication. ATP-DnaA binds to the origin of replication (oriC) to initiate formation of the DNA replication initiation complex once per cell cycle. Binds the DnaA box (a 9 base pair repeat at the origin) and separates the double-stranded (ds)DNA. Forms a right-handed helical filament on oriC DNA; dsDNA binds to the exterior of the filament while single-stranded (ss)DNA is stabiized in the filament's interior. The ATP-DnaA-oriC complex binds and stabilizes one strand of the AT-rich DNA unwinding element (DUE), permitting loading of DNA polymerase. After initiation quickly degrades to an ADP-DnaA complex that is not apt for DNA replication. Binds acidic phospholipids. The sequence is that of Chromosomal replication initiator protein DnaA from Bacillus cereus (strain ATCC 10987 / NRS 248).